Reading from the N-terminus, the 201-residue chain is MQTSPLLTQLMEALRCLSGVGPKSAQRMAFTLLQRDRSGGMRLAQALTRAMSEIGHCADCRTFTEQEVCNICSNPRRQENGQICVVESPADIYAIEQTGQFSGRYFVLMGHLSPLDGIGPDDIGLDRLEQRLAEEKITEVILATNPTVEGEATANYIAELCAQYDVEASRIAHGVPVGGELEMVDGTTLSHSLAGRHKIRF.

A C4-type zinc finger spans residues 57–72; sequence CADCRTFTEQEVCNIC. A Toprim domain is found at 81-176; that stretch reads GQICVVESPA…EASRIAHGVP (96 aa).

The protein belongs to the RecR family.

Functionally, may play a role in DNA repair. It seems to be involved in an RecBC-independent recombinational process of DNA repair. It may act with RecF and RecO. The polypeptide is Recombination protein RecR (Shigella boydii serotype 4 (strain Sb227)).